The chain runs to 60 residues: Protein translocase subunit SecE (60 aa).

The helical transmembrane segment at 37-57 threads the bilayer; sequence LLGFALVGGIGYLIHLGYIIL.

It belongs to the SecE/SEC61-gamma family. In terms of assembly, component of the Sec protein translocase complex. Heterotrimer consisting of SecY (alpha), SecG (beta) and SecE (gamma) subunits. The heterotrimers can form oligomers, although 1 heterotrimer is thought to be able to translocate proteins. Interacts with the ribosome. May interact with SecDF, and other proteins may be involved.

The protein localises to the cell membrane. Its function is as follows. Essential subunit of the Sec protein translocation channel SecYEG. Clamps together the 2 halves of SecY. May contact the channel plug during translocation. This Aeropyrum pernix (strain ATCC 700893 / DSM 11879 / JCM 9820 / NBRC 100138 / K1) protein is Protein translocase subunit SecE.